The sequence spans 395 residues: 1-deoxy-D-xylulose 5-phosphate reductoisomerase (395 aa).

NADPH contacts are provided by threonine 10, glycine 11, serine 12, isoleucine 13, alanine 36, and asparagine 123. Lysine 124 provides a ligand contact to 1-deoxy-D-xylulose 5-phosphate. Glutamate 125 is an NADPH binding site. Residue aspartate 149 coordinates Mn(2+). 1-deoxy-D-xylulose 5-phosphate-binding residues include serine 150, glutamate 151, serine 185, and histidine 208. Glutamate 151 serves as a coordination point for Mn(2+). Glycine 214 is an NADPH binding site. Residues serine 221, asparagine 226, lysine 227, and glutamate 230 each contribute to the 1-deoxy-D-xylulose 5-phosphate site. Position 230 (glutamate 230) interacts with Mn(2+).

This sequence belongs to the DXR family. Mg(2+) serves as cofactor. The cofactor is Mn(2+).

The catalysed reaction is 2-C-methyl-D-erythritol 4-phosphate + NADP(+) = 1-deoxy-D-xylulose 5-phosphate + NADPH + H(+). The protein operates within isoprenoid biosynthesis; isopentenyl diphosphate biosynthesis via DXP pathway; isopentenyl diphosphate from 1-deoxy-D-xylulose 5-phosphate: step 1/6. Its function is as follows. Catalyzes the NADPH-dependent rearrangement and reduction of 1-deoxy-D-xylulose-5-phosphate (DXP) to 2-C-methyl-D-erythritol 4-phosphate (MEP). This is 1-deoxy-D-xylulose 5-phosphate reductoisomerase from Shewanella amazonensis (strain ATCC BAA-1098 / SB2B).